Consider the following 228-residue polypeptide: MNGDLNRLMARLGYQFQDLSLLELALTHRSVSRHRNYERLEFLGDAQLGQIISVALFEQFPEAAEGQLTRMRASLVRGQTLALVARELGLGEYLVLGGGELKSGGFRRDSILADALESIIGAMLLDGGEPRCREVVLAWFAPRLDAISPQSAQKDAKTRLQEWLQARKFELPTYEVTQVEGLAPKQTFDVQCSLDNVQQIFIAQGASRRKAEQEAASLALEWLEQQYD.

Positions 5–128 constitute an RNase III domain; sequence LNRLMARLGY…IIGAMLLDGG (124 aa). Residue Glu-41 coordinates Mg(2+). Residue Asp-45 is part of the active site. Mg(2+) is bound by residues Asp-114 and Glu-117. Glu-117 is an active-site residue. One can recognise a DRBM domain in the interval 155-225; it reads DAKTRLQEWL…ASLALEWLEQ (71 aa).

The protein belongs to the ribonuclease III family. As to quaternary structure, homodimer. Mg(2+) serves as cofactor.

It localises to the cytoplasm. The enzyme catalyses Endonucleolytic cleavage to 5'-phosphomonoester.. Functionally, digests double-stranded RNA. Involved in the processing of primary rRNA transcript to yield the immediate precursors to the large and small rRNAs (23S and 16S). Processes some mRNAs, and tRNAs when they are encoded in the rRNA operon. Processes pre-crRNA and tracrRNA of type II CRISPR loci if present in the organism. The protein is Ribonuclease 3 of Alcanivorax borkumensis (strain ATCC 700651 / DSM 11573 / NCIMB 13689 / SK2).